Consider the following 277-residue polypeptide: Undecaprenyl-diphosphatase (277 aa).

The next 6 membrane-spanning stretches (helical) occupy residues 88–108 (MGWLVILGSLPIIVLGLLFQD), 117–137 (MWIVATMLIVFGLILAVADAV), 157–179 (FAQAMALIPGVSRSGGTITAGLL), 191–211 (SFLLAIPAVFGSGLYQLYKVV), 227–247 (LATVIAFVVGYVIIGWFLKFV), and 255–275 (FVWYRIFLGLALYLLLGFGVI).

It belongs to the UppP family.

The protein resides in the cell membrane. The enzyme catalyses di-trans,octa-cis-undecaprenyl diphosphate + H2O = di-trans,octa-cis-undecaprenyl phosphate + phosphate + H(+). Functionally, catalyzes the dephosphorylation of undecaprenyl diphosphate (UPP). Confers resistance to bacitracin. The chain is Undecaprenyl-diphosphatase from Pseudarthrobacter chlorophenolicus (strain ATCC 700700 / DSM 12829 / CIP 107037 / JCM 12360 / KCTC 9906 / NCIMB 13794 / A6) (Arthrobacter chlorophenolicus).